Here is a 388-residue protein sequence, read N- to C-terminus: 8-amino-7-oxononanoate synthase (388 aa).

Arg-20 serves as a coordination point for substrate. A pyridoxal 5'-phosphate-binding site is contributed by 107–108 (GY). His-132 is a binding site for substrate. Pyridoxal 5'-phosphate contacts are provided by Ser-178, His-206, and Thr-237. Lys-240 bears the N6-(pyridoxal phosphate)lysine mark. Residue Thr-356 coordinates substrate.

The protein belongs to the class-II pyridoxal-phosphate-dependent aminotransferase family. BioF subfamily. In terms of assembly, homodimer. The cofactor is pyridoxal 5'-phosphate.

It catalyses the reaction 6-carboxyhexanoyl-[ACP] + L-alanine + H(+) = (8S)-8-amino-7-oxononanoate + holo-[ACP] + CO2. The protein operates within cofactor biosynthesis; biotin biosynthesis. Catalyzes the decarboxylative condensation of pimeloyl-[acyl-carrier protein] and L-alanine to produce 8-amino-7-oxononanoate (AON), [acyl-carrier protein], and carbon dioxide. This chain is 8-amino-7-oxononanoate synthase, found in Herminiimonas arsenicoxydans.